The sequence spans 170 residues: Small ribosomal subunit protein uS9 (170 aa).

The tract at residues methionine 1–glycine 47 is disordered.

The protein belongs to the universal ribosomal protein uS9 family.

This is Small ribosomal subunit protein uS9 (rpsI) from Streptomyces coelicolor (strain ATCC BAA-471 / A3(2) / M145).